A 372-amino-acid polypeptide reads, in one-letter code: Anhydro-N-acetylmuramic acid kinase (372 aa).

13-20 provides a ligand contact to ATP; the sequence is GTSMDGID.

The protein belongs to the anhydro-N-acetylmuramic acid kinase family.

It catalyses the reaction 1,6-anhydro-N-acetyl-beta-muramate + ATP + H2O = N-acetyl-D-muramate 6-phosphate + ADP + H(+). The protein operates within amino-sugar metabolism; 1,6-anhydro-N-acetylmuramate degradation. It functions in the pathway cell wall biogenesis; peptidoglycan recycling. Its function is as follows. Catalyzes the specific phosphorylation of 1,6-anhydro-N-acetylmuramic acid (anhMurNAc) with the simultaneous cleavage of the 1,6-anhydro ring, generating MurNAc-6-P. Is required for the utilization of anhMurNAc either imported from the medium or derived from its own cell wall murein, and thus plays a role in cell wall recycling. This is Anhydro-N-acetylmuramic acid kinase from Rhizobium johnstonii (strain DSM 114642 / LMG 32736 / 3841) (Rhizobium leguminosarum bv. viciae).